The primary structure comprises 92 residues: Small ribosomal subunit protein uS19c (92 aa).

The protein belongs to the universal ribosomal protein uS19 family.

The protein localises to the plastid. The protein resides in the chloroplast. Functionally, protein S19 forms a complex with S13 that binds strongly to the 16S ribosomal RNA. The chain is Small ribosomal subunit protein uS19c from Draba nemorosa (Woodland whitlowgrass).